Consider the following 64-residue polypeptide: Large ribosomal subunit protein uL29 (64 aa).

Belongs to the universal ribosomal protein uL29 family.

The protein is Large ribosomal subunit protein uL29 of Lacticaseibacillus paracasei (strain ATCC 334 / BCRC 17002 / CCUG 31169 / CIP 107868 / KCTC 3260 / NRRL B-441) (Lactobacillus paracasei).